We begin with the raw amino-acid sequence, 202 residues long: Nitrophorin-3 (202 aa).

Positions 1-23 (MEPYSALLAVTILCLTSTMGVSG) are cleaved as a signal peptide. Disulfide bonds link Cys-25/Cys-144 and Cys-62/Cys-193. His-80 contributes to the heme binding site.

Belongs to the calycin superfamily. Nitrophorin family. In terms of assembly, interacts weakly with host coagulation factor IX (F9) (inactive and activated) in the presence of Ca(2+). In terms of tissue distribution, salivary gland (at protein level).

Its subcellular location is the secreted. Heme-based protein that deliver nitric oxide gas (NO) to the victim while feeding, resulting in vasodilation and inhibition of platelet aggregation. Reversibly binds nitric oxide (NO). Also binds tightly to histamine, which is released by the host to induce wound healing. Exhibits weak anticoagulant activity. This is Nitrophorin-3 from Rhodnius prolixus (Triatomid bug).